Reading from the N-terminus, the 149-residue chain is Ribonuclease H (149 aa).

Positions Met-1–Asp-143 constitute an RNase H type-1 domain. 4 residues coordinate Mg(2+): Asp-9, Glu-47, Asp-69, and Asp-135.

The protein belongs to the RNase H family. Monomer. The cofactor is Mg(2+).

The protein resides in the cytoplasm. The catalysed reaction is Endonucleolytic cleavage to 5'-phosphomonoester.. In terms of biological role, endonuclease that specifically degrades the RNA of RNA-DNA hybrids. In Paracidovorax citrulli (strain AAC00-1) (Acidovorax citrulli), this protein is Ribonuclease H.